Reading from the N-terminus, the 382-residue chain is D-galactonate dehydratase (382 aa).

Residue Asp-183 participates in Mg(2+) binding. His-185 (proton donor) is an active-site residue. Positions 209 and 235 each coordinate Mg(2+). The active-site Proton acceptor is His-285.

Belongs to the mandelate racemase/muconate lactonizing enzyme family. GalD subfamily. Mg(2+) is required as a cofactor.

The catalysed reaction is D-galactonate = 2-dehydro-3-deoxy-D-galactonate + H2O. It functions in the pathway carbohydrate acid metabolism; D-galactonate degradation; D-glyceraldehyde 3-phosphate and pyruvate from D-galactonate: step 1/3. In terms of biological role, catalyzes the dehydration of D-galactonate to 2-keto-3-deoxy-D-galactonate. In Salmonella gallinarum (strain 287/91 / NCTC 13346), this protein is D-galactonate dehydratase.